The sequence spans 409 residues: Gamma-glutamyl phosphate reductase (409 aa).

It belongs to the gamma-glutamyl phosphate reductase family.

The protein resides in the cytoplasm. The catalysed reaction is L-glutamate 5-semialdehyde + phosphate + NADP(+) = L-glutamyl 5-phosphate + NADPH + H(+). Its pathway is amino-acid biosynthesis; L-proline biosynthesis; L-glutamate 5-semialdehyde from L-glutamate: step 2/2. Its function is as follows. Catalyzes the NADPH-dependent reduction of L-glutamate 5-phosphate into L-glutamate 5-semialdehyde and phosphate. The product spontaneously undergoes cyclization to form 1-pyrroline-5-carboxylate. In Koribacter versatilis (strain Ellin345), this protein is Gamma-glutamyl phosphate reductase.